The following is a 255-amino-acid chain: 5'-nucleotidase SurE (255 aa).

Residues aspartate 8, aspartate 9, serine 40, and asparagine 93 each contribute to the a divalent metal cation site.

Belongs to the SurE nucleotidase family. The cofactor is a divalent metal cation.

Its subcellular location is the cytoplasm. It carries out the reaction a ribonucleoside 5'-phosphate + H2O = a ribonucleoside + phosphate. Its function is as follows. Nucleotidase that shows phosphatase activity on nucleoside 5'-monophosphates. This is 5'-nucleotidase SurE from Rhodopseudomonas palustris (strain HaA2).